Consider the following 93-residue polypeptide: Large ribosomal subunit protein bL27 (93 aa).

Positions 1 to 8 are excised as a propeptide; that stretch reads MIMDLQFF. The disordered stretch occupies residues 8–29; that stretch reads FSHHKGGGSTANGRNSAGRRLG.

Belongs to the bacterial ribosomal protein bL27 family. The N-terminus is cleaved by ribosomal processing cysteine protease Prp.

The protein is Large ribosomal subunit protein bL27 of Limosilactobacillus reuteri (strain DSM 20016) (Lactobacillus reuteri).